The following is a 376-amino-acid chain: Succinyl-diaminopimelate desuccinylase (376 aa).

A Zn(2+)-binding site is contributed by H66. Residue D68 is part of the active site. Position 99 (D99) interacts with Zn(2+). The active-site Proton acceptor is E133. E134, E162, and H348 together coordinate Zn(2+).

Belongs to the peptidase M20A family. DapE subfamily. In terms of assembly, homodimer. The cofactor is Zn(2+). Co(2+) is required as a cofactor.

The catalysed reaction is N-succinyl-(2S,6S)-2,6-diaminopimelate + H2O = (2S,6S)-2,6-diaminopimelate + succinate. Its pathway is amino-acid biosynthesis; L-lysine biosynthesis via DAP pathway; LL-2,6-diaminopimelate from (S)-tetrahydrodipicolinate (succinylase route): step 3/3. Functionally, catalyzes the hydrolysis of N-succinyl-L,L-diaminopimelic acid (SDAP), forming succinate and LL-2,6-diaminopimelate (DAP), an intermediate involved in the bacterial biosynthesis of lysine and meso-diaminopimelic acid, an essential component of bacterial cell walls. The protein is Succinyl-diaminopimelate desuccinylase of Thioalkalivibrio sulfidiphilus (strain HL-EbGR7).